The sequence spans 366 residues: Phosphoserine aminotransferase (366 aa).

An L-glutamate-binding site is contributed by R42. Residues 76-77 (AT), W101, T156, D178, and Q201 contribute to the pyridoxal 5'-phosphate site. K202 is subject to N6-(pyridoxal phosphate)lysine. 243 to 244 (NT) contacts pyridoxal 5'-phosphate.

It belongs to the class-V pyridoxal-phosphate-dependent aminotransferase family. SerC subfamily. In terms of assembly, homodimer. Pyridoxal 5'-phosphate serves as cofactor.

Its subcellular location is the cytoplasm. The catalysed reaction is O-phospho-L-serine + 2-oxoglutarate = 3-phosphooxypyruvate + L-glutamate. It carries out the reaction 4-(phosphooxy)-L-threonine + 2-oxoglutarate = (R)-3-hydroxy-2-oxo-4-phosphooxybutanoate + L-glutamate. Its pathway is amino-acid biosynthesis; L-serine biosynthesis; L-serine from 3-phospho-D-glycerate: step 2/3. It functions in the pathway cofactor biosynthesis; pyridoxine 5'-phosphate biosynthesis; pyridoxine 5'-phosphate from D-erythrose 4-phosphate: step 3/5. Its function is as follows. Catalyzes the reversible conversion of 3-phosphohydroxypyruvate to phosphoserine and of 3-hydroxy-2-oxo-4-phosphonooxybutanoate to phosphohydroxythreonine. The protein is Phosphoserine aminotransferase of Aromatoleum aromaticum (strain DSM 19018 / LMG 30748 / EbN1) (Azoarcus sp. (strain EbN1)).